We begin with the raw amino-acid sequence, 134 residues long: Profilin-4 (134 aa).

Cys13 and Cys118 are joined by a disulfide. The short motif at 84 to 100 is the Involved in PIP2 interaction element; it reads AVIRGKKGSGGITIKKT. Thr114 carries the post-translational modification Phosphothreonine.

The protein belongs to the profilin family. As to quaternary structure, occurs in many kinds of cells as a complex with monomeric actin in a 1:1 ratio. In terms of processing, phosphorylated by MAP kinases.

It is found in the cytoplasm. Its subcellular location is the cytoskeleton. Its function is as follows. Binds to actin and affects the structure of the cytoskeleton. At high concentrations, profilin prevents the polymerization of actin, whereas it enhances it at low concentrations. This Olea europaea (Common olive) protein is Profilin-4.